We begin with the raw amino-acid sequence, 205 residues long: Protein-L-isoaspartate O-methyltransferase (205 aa).

S52 is a catalytic residue.

This sequence belongs to the methyltransferase superfamily. L-isoaspartyl/D-aspartyl protein methyltransferase family.

It is found in the cytoplasm. The enzyme catalyses [protein]-L-isoaspartate + S-adenosyl-L-methionine = [protein]-L-isoaspartate alpha-methyl ester + S-adenosyl-L-homocysteine. In terms of biological role, catalyzes the methyl esterification of L-isoaspartyl residues in peptides and proteins that result from spontaneous decomposition of normal L-aspartyl and L-asparaginyl residues. It plays a role in the repair and/or degradation of damaged proteins. This is Protein-L-isoaspartate O-methyltransferase from Gloeobacter violaceus (strain ATCC 29082 / PCC 7421).